Reading from the N-terminus, the 86-residue chain is DNA-directed RNA polymerase subunit Rpo11 (86 aa).

The protein belongs to the archaeal Rpo11/eukaryotic RPB11/RPC19 RNA polymerase subunit family. As to quaternary structure, part of the RNA polymerase complex.

Its subcellular location is the cytoplasm. The catalysed reaction is RNA(n) + a ribonucleoside 5'-triphosphate = RNA(n+1) + diphosphate. In terms of biological role, DNA-dependent RNA polymerase (RNAP) catalyzes the transcription of DNA into RNA using the four ribonucleoside triphosphates as substrates. This Archaeoglobus fulgidus (strain ATCC 49558 / DSM 4304 / JCM 9628 / NBRC 100126 / VC-16) protein is DNA-directed RNA polymerase subunit Rpo11.